Reading from the N-terminus, the 626-residue chain is UvrABC system protein C (626 aa).

Positions 25 to 104 (TSPGVYRFSN…IKELKPRYNV (80 aa)) constitute a GIY-YIG domain. Residues 218–253 (SALLRDLSAEMQKKAKELKFEEAAALKAQIEGLKRY) form the UVR domain.

Belongs to the UvrC family. As to quaternary structure, interacts with UvrB in an incision complex.

The protein resides in the cytoplasm. Its function is as follows. The UvrABC repair system catalyzes the recognition and processing of DNA lesions. UvrC both incises the 5' and 3' sides of the lesion. The N-terminal half is responsible for the 3' incision and the C-terminal half is responsible for the 5' incision. The protein is UvrABC system protein C of Chlorobaculum tepidum (strain ATCC 49652 / DSM 12025 / NBRC 103806 / TLS) (Chlorobium tepidum).